A 508-amino-acid polypeptide reads, in one-letter code: MKSVTPVLLLILDGFGHRLDGDDNAIALARTPNWDRLRRDHPYGTIDASERAVGLPRGQFGNSEVGHLNIGAGRIVTQDISRIDLDLEEQRFAGNPAFTHAFAAARGHALHILGLLSDGGVHSHENHIHALIRAAQAAGVADIRVHAFLDGRDTPPRSARTYLERLDAVLAECPNARLATVCGRYFAMDRDKRWERVEQAYRLIVDGEAAFQADDGLSALAAAYARDENDEFVRATRIGAPAPMQDGDAVIFMNFRADRARELTSALTDPEFDGFSARQLRLSDYVTLTRYGADYASLSIAYPPQTIRNGFGEYLASQGLRQLRIAETEKYPHVTYFFNGGEETVYPGEDRILVPSPKVATYDLQPEMSAEEVTNRIVEAINSRQYQAIICNYANGDMVGHTGNLPAAIRAVETLDGCINRCVEAMLANGGEVLITADHGNCEQMDDPLHQQPHTQHTTNLVPLCYVGHRPARILEGGALKDIAPTLLALMGLPAPDDMTGHSLVELL.

Mn(2+) is bound by residues Asp-13 and Ser-63. Ser-63 acts as the Phosphoserine intermediate in catalysis. Substrate is bound by residues His-122, 152–153 (RD), Arg-184, Arg-190, 256–259 (RADR), and Lys-330. Residues Asp-397, His-401, Asp-438, His-439, and His-457 each coordinate Mn(2+).

This sequence belongs to the BPG-independent phosphoglycerate mutase family. In terms of assembly, monomer. Mn(2+) serves as cofactor.

The enzyme catalyses (2R)-2-phosphoglycerate = (2R)-3-phosphoglycerate. Its pathway is carbohydrate degradation; glycolysis; pyruvate from D-glyceraldehyde 3-phosphate: step 3/5. Catalyzes the interconversion of 2-phosphoglycerate and 3-phosphoglycerate. This chain is 2,3-bisphosphoglycerate-independent phosphoglycerate mutase, found in Laribacter hongkongensis (strain HLHK9).